Reading from the N-terminus, the 174-residue chain is Transcriptional repressor NrdR (174 aa).

The segment at 3-34 (CPICHFPETDVIDTRKLYEGEVIRRRRKCRAC) is a zinc-finger region. In terms of domain architecture, ATP-cone spans 49–139 (LMVVKKDGTR…VYRSFADIGK (91 aa)). A disordered region spans residues 151–174 (EGTRNGHSSAATTDQGTTDNHSRM). Residues 155–174 (NGHSSAATTDQGTTDNHSRM) show a composition bias toward polar residues.

The protein belongs to the NrdR family. Zn(2+) is required as a cofactor.

Its function is as follows. Negatively regulates transcription of bacterial ribonucleotide reductase nrd genes and operons by binding to NrdR-boxes. The polypeptide is Transcriptional repressor NrdR (Chloroflexus aggregans (strain MD-66 / DSM 9485)).